Reading from the N-terminus, the 514-residue chain is Folylpolyglutamate synthase (514 aa).

82–85 (GKGS) lines the ATP pocket. Mg(2+) is bound by residues Ser-107, Glu-186, and His-214. Positions 339 and 355 each coordinate ATP.

It belongs to the folylpolyglutamate synthase family. A monovalent cation serves as cofactor.

It localises to the mitochondrion inner membrane. Its subcellular location is the mitochondrion matrix. The protein localises to the cytoplasm. It carries out the reaction (6S)-5,6,7,8-tetrahydrofolyl-(gamma-L-Glu)(n) + L-glutamate + ATP = (6S)-5,6,7,8-tetrahydrofolyl-(gamma-L-Glu)(n+1) + ADP + phosphate + H(+). It functions in the pathway cofactor biosynthesis; tetrahydrofolylpolyglutamate biosynthesis. In terms of biological role, catalyzes conversion of folates to polyglutamate derivatives allowing concentration of folate compounds in the cell and the intracellular retention of these cofactors, which are important substrates for most of the folate-dependent enzymes that are involved in one-carbon transfer reactions involved in purine, pyrimidine and amino acid synthesis. This is Folylpolyglutamate synthase (MET7) from Candida albicans (Yeast).